Here is a 148-residue protein sequence, read N- to C-terminus: Lysozyme C (148 aa).

Positions methionine 1 to glycine 18 are cleaved as a signal peptide. In terms of domain architecture, C-type lysozyme spans lysine 19–valine 148. Intrachain disulfides connect cysteine 24–cysteine 146, cysteine 48–cysteine 134, cysteine 83–cysteine 99, and cysteine 95–cysteine 113. Residues glutamate 53 and aspartate 71 contribute to the active site.

It belongs to the glycosyl hydrolase 22 family. Monomer.

The catalysed reaction is Hydrolysis of (1-&gt;4)-beta-linkages between N-acetylmuramic acid and N-acetyl-D-glucosamine residues in a peptidoglycan and between N-acetyl-D-glucosamine residues in chitodextrins.. Lysozymes have primarily a bacteriolytic function; those in tissues and body fluids are associated with the monocyte-macrophage system and enhance the activity of immunoagents. In Gorilla gorilla gorilla (Western lowland gorilla), this protein is Lysozyme C (LYZ).